A 103-amino-acid polypeptide reads, in one-letter code: Heme-copper oxidase subunit 4 (103 aa).

Helical transmembrane passes span valine 20 to alanine 40, asparagine 42 to phenylalanine 62, and isoleucine 75 to leucine 95.

Its subcellular location is the cell membrane. The sequence is that of Heme-copper oxidase subunit 4 (aoxC) from Aeropyrum pernix (strain ATCC 700893 / DSM 11879 / JCM 9820 / NBRC 100138 / K1).